Consider the following 588-residue polypeptide: Putative ABC transporter ATP-binding protein PAM_020 (588 aa).

2 consecutive ABC transporter domains span residues 6 to 247 (IIFK…GIQE) and 317 to 551 (LQLQ…TSLN). Residues 40–47 (GKNGSGKS) and 351–358 (GKNGSGKS) each bind ATP.

It belongs to the ABC transporter superfamily.

Its subcellular location is the cell membrane. Its function is as follows. Probably part of an ABC transporter complex. Responsible for energy coupling to the transport system. The protein is Putative ABC transporter ATP-binding protein PAM_020 of Onion yellows phytoplasma (strain OY-M).